Consider the following 72-residue polypeptide: Translation initiation factor IF-1 (72 aa).

In terms of domain architecture, S1-like spans methionine 1–arginine 72.

Belongs to the IF-1 family. Component of the 30S ribosomal translation pre-initiation complex which assembles on the 30S ribosome in the order IF-2 and IF-3, IF-1 and N-formylmethionyl-tRNA(fMet); mRNA recruitment can occur at any time during PIC assembly.

The protein resides in the cytoplasm. One of the essential components for the initiation of protein synthesis. Stabilizes the binding of IF-2 and IF-3 on the 30S subunit to which N-formylmethionyl-tRNA(fMet) subsequently binds. Helps modulate mRNA selection, yielding the 30S pre-initiation complex (PIC). Upon addition of the 50S ribosomal subunit IF-1, IF-2 and IF-3 are released leaving the mature 70S translation initiation complex. The sequence is that of Translation initiation factor IF-1 from Aeromonas hydrophila subsp. hydrophila (strain ATCC 7966 / DSM 30187 / BCRC 13018 / CCUG 14551 / JCM 1027 / KCTC 2358 / NCIMB 9240 / NCTC 8049).